The primary structure comprises 31 residues: PTEN upstream open reading frame MP31 (31 aa).

Interacts with lactate dehydrogenases LDHA and LDHB; interaction with mitochondrial LDH leads to inhibition of lactate dehydrogenase activity, preventing conversion of lactate to pyruvate. As to expression, expressed in brain (at protein level). Expressed at lower levels in glioblastomas than in normal brain tissue (at protein level).

The protein resides in the mitochondrion. In terms of biological role, inhibits lactate dehydrogenase (LDH)-mediated conversion of lactate to pyruvate in mitochondria by competing with mitochondrial LDH for binding to NAD(+). Also inhibits cellular lactate utilization. The protein is PTEN upstream open reading frame MP31 of Homo sapiens (Human).